The following is a 292-amino-acid chain: High-affinity heme uptake system protein IsdE (292 aa).

The signal sequence occupies residues 1–19 (MRIIKYLTILVISVVILTS). C20 is lipidated: N-palmitoyl cysteine. A lipid anchor (S-diacylglycerol cysteine) is attached at C20. Positions 35 to 291 (RIVPTTVALT…QLYDLFYKDK (257 aa)) constitute a Fe/B12 periplasmic-binding domain. Heme contacts are provided by V41, A42, S60, Y61, M78, and H229.

The protein belongs to the bacterial solute-binding protein 8 family. Heme b is required as a cofactor.

The protein localises to the cell membrane. Involved in heme (porphyrin) scavenging. Binds Fe(2+) and Fe(3+) heme but the largest fraction is Fe(2+) heme. Functions as a high-affinity heme binding protein and probably has a role in relaying heme-iron from cell wall-anchored isd proteins receptors to the probable permease IsdF. The sequence is that of High-affinity heme uptake system protein IsdE (isdE) from Staphylococcus aureus (strain Mu3 / ATCC 700698).